A 157-amino-acid polypeptide reads, in one-letter code: Large ribosomal subunit protein eL24 (157 aa).

Residues 94–157 (RNQKPEVRKA…ISAPRVGGKR (64 aa)) form a disordered region. The segment covering 96 to 117 (QKPEVRKAQREQAIRAAKEAKK) has biased composition (basic and acidic residues). Over residues 123-140 (KKPAAPSAKASTKTAQKP) the composition is skewed to low complexity.

Belongs to the eukaryotic ribosomal protein eL24 family. In terms of assembly, component of the large ribosomal subunit.

It localises to the cytoplasm. Functionally, component of the large ribosomal subunit. The ribosome is a large ribonucleoprotein complex responsible for the synthesis of proteins in the cell. This chain is Large ribosomal subunit protein eL24 (rpl24), found in Pagrus major (Red sea bream).